The primary structure comprises 872 residues: Protein SCD5 (872 aa).

2 disordered regions span residues 1-98 and 209-239; these read MSFD…SGGD and PKPR…TGDQ. Residues 48-85 show a composition bias toward polar residues; sequence FWDQGSRSHSDTTLSYRNNHSNTAADNATNVSSPQKDN. Positions 272–276 match the KKRVK motif; Required for interaction with GLC7, endocytosis and actin cytoskeleton organization motif; sequence KKVRF. Disordered stretches follow at residues 280–321 and 338–358; these read ITFQ…LDFT and SGLV…KKVL. 2 stretches are compositionally biased toward polar residues: residues 284–296 and 339–348; these read DPPN…SNNS and GLVSSLPSEQ. 12 repeat units span residues 405–424, 439–458, 479–498, 534–545, 564–575, 593–604, 608–619, 623–634, 636–647, 650–661, 683–694, and 717–728. Residues 405–448 form a 3 X 20 AA approximate repeats region; sequence QLPLEPLKPTATGSANHLVREEYNQGLHPSNGAIQTGLQPLKPT. 2 positions are modified to phosphothreonine; by PRK1: Thr416 and Thr450. Residues 460–489 form a disordered region; it reads HMEQPQSIKPSSTPETVTNSGGLQPLKPTA. Over residues 462-481 the composition is skewed to polar residues; it reads EQPQSIKPSSTPETVTNSGG. A Phosphothreonine; by PRK1 modification is found at Thr490. 2 disordered regions span residues 516–571 and 591–620; these read QFTN…TYSN and AFPP…QRSQ. Residues 534–728 are 9 X 12 AA approximate repeats; that stretch reads SPNITLPQSN…QNAANSYFQS (195 aa). Ser564 is modified (phosphoserine). Positions 594–620 are enriched in polar residues; that stretch reads PQNTLPQHQQSHLLSPQNTIPQHQRSQ. The tract at residues 649 to 681 is disordered; sequence ISPQNTYTNNQQQPQHLPPPPPPRAQQQQQGAI. The span at 651-663 shows a compositional bias: low complexity; that stretch reads PQNTYTNNQQQPQ. A compositionally biased stretch (polar residues) spans 697 to 727; that stretch reads LVPTQPSYTNSPSIQSPNFLSPQNAANSYFQ. 2 disordered regions span residues 697-758 and 806-838; these read LVPT…ISSF and NSDI…QFPF. Residues 728–745 show a composition bias toward low complexity; it reads SLLSSSPSPNPTPSNAST. Polar residues-rich tracts occupy residues 746 to 758 and 806 to 815; these read VNGN…ISSF and NSDIHSQPNK. A compositionally biased stretch (low complexity) spans 823–835; sequence QQVHQQQQQQQQQ.

Interacts (via KKVRF motif) with phosphatase GLC7. In terms of processing, phosphorylation by PRK1 and/or AKL1 on Thr-416, Thr-450 and Thr-490 of repeats 1-1, 1-2 and/or 1-3 negatively regulates SCD5 function in endocytosis and actin cytoskeleton organization.

The protein localises to the membrane. Regulates both fluid phase and receptor-mediated endocytosis. Involved in vesicular transport at a late stage of the secretory pathway. Regulates actin cytoskeleton organization. The polypeptide is Protein SCD5 (SCD5) (Saccharomyces cerevisiae (strain ATCC 204508 / S288c) (Baker's yeast)).